We begin with the raw amino-acid sequence, 204 residues long: Probable nicotinate-nucleotide adenylyltransferase (204 aa).

Belongs to the NadD family.

It carries out the reaction nicotinate beta-D-ribonucleotide + ATP + H(+) = deamido-NAD(+) + diphosphate. Its pathway is cofactor biosynthesis; NAD(+) biosynthesis; deamido-NAD(+) from nicotinate D-ribonucleotide: step 1/1. In terms of biological role, catalyzes the reversible adenylation of nicotinate mononucleotide (NaMN) to nicotinic acid adenine dinucleotide (NaAD). The polypeptide is Probable nicotinate-nucleotide adenylyltransferase (Dehalococcoides mccartyi (strain ATCC BAA-2266 / KCTC 15142 / 195) (Dehalococcoides ethenogenes (strain 195))).